Consider the following 154-residue polypeptide: 6,7-dimethyl-8-ribityllumazine synthase (154 aa).

5-amino-6-(D-ribitylamino)uracil contacts are provided by residues Phe-22, 57–59 (AYE), and 81–83 (AVI). 86 to 87 (GT) contributes to the (2S)-2-hydroxy-3-oxobutyl phosphate binding site. His-89 functions as the Proton donor in the catalytic mechanism. Position 114 (Phe-114) interacts with 5-amino-6-(D-ribitylamino)uracil. A (2S)-2-hydroxy-3-oxobutyl phosphate-binding site is contributed by Arg-128.

It belongs to the DMRL synthase family. In terms of assembly, forms an icosahedral capsid composed of 60 subunits, arranged as a dodecamer of pentamers.

The enzyme catalyses (2S)-2-hydroxy-3-oxobutyl phosphate + 5-amino-6-(D-ribitylamino)uracil = 6,7-dimethyl-8-(1-D-ribityl)lumazine + phosphate + 2 H2O + H(+). Its pathway is cofactor biosynthesis; riboflavin biosynthesis; riboflavin from 2-hydroxy-3-oxobutyl phosphate and 5-amino-6-(D-ribitylamino)uracil: step 1/2. Catalyzes the formation of 6,7-dimethyl-8-ribityllumazine by condensation of 5-amino-6-(D-ribitylamino)uracil with 3,4-dihydroxy-2-butanone 4-phosphate. This is the penultimate step in the biosynthesis of riboflavin. This is 6,7-dimethyl-8-ribityllumazine synthase from Idiomarina loihiensis (strain ATCC BAA-735 / DSM 15497 / L2-TR).